The sequence spans 277 residues: 4-hydroxy-tetrahydrodipicolinate reductase (277 aa).

Residues 11–16 (GALGRM) and 110–112 (GTT) each bind NAD(+). Histidine 166 acts as the Proton donor/acceptor in catalysis. Histidine 167 is a (S)-2,3,4,5-tetrahydrodipicolinate binding site. Catalysis depends on lysine 170, which acts as the Proton donor. 176–177 (GT) contributes to the (S)-2,3,4,5-tetrahydrodipicolinate binding site.

The protein belongs to the DapB family.

It is found in the cytoplasm. It carries out the reaction (S)-2,3,4,5-tetrahydrodipicolinate + NAD(+) + H2O = (2S,4S)-4-hydroxy-2,3,4,5-tetrahydrodipicolinate + NADH + H(+). The catalysed reaction is (S)-2,3,4,5-tetrahydrodipicolinate + NADP(+) + H2O = (2S,4S)-4-hydroxy-2,3,4,5-tetrahydrodipicolinate + NADPH + H(+). It participates in amino-acid biosynthesis; L-lysine biosynthesis via DAP pathway; (S)-tetrahydrodipicolinate from L-aspartate: step 4/4. In terms of biological role, catalyzes the conversion of 4-hydroxy-tetrahydrodipicolinate (HTPA) to tetrahydrodipicolinate. The polypeptide is 4-hydroxy-tetrahydrodipicolinate reductase (Synechococcus sp. (strain CC9605)).